Reading from the N-terminus, the 258-residue chain is Ribosomal RNA small subunit methyltransferase A (258 aa).

S-adenosyl-L-methionine is bound by residues histidine 9, leucine 11, glycine 36, glutamate 57, aspartate 83, and asparagine 102.

This sequence belongs to the class I-like SAM-binding methyltransferase superfamily. rRNA adenine N(6)-methyltransferase family. RsmA subfamily.

It is found in the cytoplasm. The enzyme catalyses adenosine(1518)/adenosine(1519) in 16S rRNA + 4 S-adenosyl-L-methionine = N(6)-dimethyladenosine(1518)/N(6)-dimethyladenosine(1519) in 16S rRNA + 4 S-adenosyl-L-homocysteine + 4 H(+). Specifically dimethylates two adjacent adenosines (A1518 and A1519) in the loop of a conserved hairpin near the 3'-end of 16S rRNA in the 30S particle. May play a critical role in biogenesis of 30S subunits. In Caulobacter vibrioides (strain ATCC 19089 / CIP 103742 / CB 15) (Caulobacter crescentus), this protein is Ribosomal RNA small subunit methyltransferase A.